The primary structure comprises 256 residues: Type III pantothenate kinase 1 (256 aa).

Position 6–13 (6–13) interacts with ATP; the sequence is DIGNSHIF. 107–110 contributes to the substrate binding site; sequence GADR. The Proton acceptor role is filled by D109. D130 provides a ligand contact to K(+). T133 contributes to the ATP binding site. T185 is a substrate binding site.

Belongs to the type III pantothenate kinase family. As to quaternary structure, homodimer. NH4(+) serves as cofactor. It depends on K(+) as a cofactor.

It localises to the cytoplasm. The enzyme catalyses (R)-pantothenate + ATP = (R)-4'-phosphopantothenate + ADP + H(+). The protein operates within cofactor biosynthesis; coenzyme A biosynthesis; CoA from (R)-pantothenate: step 1/5. Functionally, catalyzes the phosphorylation of pantothenate (Pan), the first step in CoA biosynthesis. In Francisella tularensis subsp. holarctica (strain LVS), this protein is Type III pantothenate kinase 1.